A 324-amino-acid chain; its full sequence is Archaeosine synthase subunit beta (324 aa).

Residues 12–254 (GKPGTALFII…LIWAKRKFPN (243 aa)) enclose the Radical SAM core domain. [4Fe-4S] cluster-binding residues include Cys27, Cys36, and Cys39.

This sequence belongs to the radical SAM superfamily. RaSEA family. As to quaternary structure, forms a robust complex with the archaeosine synthase alpha subunit ArcS, likely an alpha(2)beta(2) heterotetrameric structure. The cofactor is [4Fe-4S] cluster.

It carries out the reaction 7-N-[(5S)-5-amino-5-carboxypentyl]formamidino-7-deazaguanosine(15) in tRNA + S-adenosyl-L-methionine = archaeosine(15) in tRNA + L-1-piperideine-6-carboxylate + 5'-deoxyadenosine + L-methionine + 2 H(+). It participates in tRNA modification; archaeosine-tRNA biosynthesis. Radical SAM enzyme involved in the synthesis of archaeosine, a modified nucleoside present in the dihydrouridine loop (D-loop) of archaeal tRNAs. Catalyzes the cleavage of the C(epsilon)-N bond of the lysine moiety of q0kN15-tRNA, leading to the formation of archaeosine at position 15 in tRNAs. In Thermococcus kodakarensis (strain ATCC BAA-918 / JCM 12380 / KOD1) (Pyrococcus kodakaraensis (strain KOD1)), this protein is Archaeosine synthase subunit beta.